A 172-amino-acid polypeptide reads, in one-letter code: Translation initiation factor IF-3 (172 aa).

It belongs to the IF-3 family. As to quaternary structure, monomer.

The protein localises to the cytoplasm. Functionally, IF-3 binds to the 30S ribosomal subunit and shifts the equilibrium between 70S ribosomes and their 50S and 30S subunits in favor of the free subunits, thus enhancing the availability of 30S subunits on which protein synthesis initiation begins. The sequence is that of Translation initiation factor IF-3 from Sulfurimonas denitrificans (strain ATCC 33889 / DSM 1251) (Thiomicrospira denitrificans (strain ATCC 33889 / DSM 1251)).